A 137-amino-acid chain; its full sequence is Large ribosomal subunit protein uL16 (137 aa).

This sequence belongs to the universal ribosomal protein uL16 family. Part of the 50S ribosomal subunit.

Its function is as follows. Binds 23S rRNA and is also seen to make contacts with the A and possibly P site tRNAs. This is Large ribosomal subunit protein uL16 from Leuconostoc mesenteroides subsp. mesenteroides (strain ATCC 8293 / DSM 20343 / BCRC 11652 / CCM 1803 / JCM 6124 / NCDO 523 / NBRC 100496 / NCIMB 8023 / NCTC 12954 / NRRL B-1118 / 37Y).